The primary structure comprises 188 residues: Ribosome maturation factor RimM (188 aa).

Residues aspartate 96–glycine 169 enclose the PRC barrel domain.

It belongs to the RimM family. Binds ribosomal protein uS19.

It localises to the cytoplasm. Its function is as follows. An accessory protein needed during the final step in the assembly of 30S ribosomal subunit, possibly for assembly of the head region. Essential for efficient processing of 16S rRNA. May be needed both before and after RbfA during the maturation of 16S rRNA. It has affinity for free ribosomal 30S subunits but not for 70S ribosomes. The sequence is that of Ribosome maturation factor RimM from Agrobacterium fabrum (strain C58 / ATCC 33970) (Agrobacterium tumefaciens (strain C58)).